Consider the following 121-residue polypeptide: Small ribosomal subunit protein uS13 (121 aa).

Positions 92 to 121 (RRGLPVRGQNSKNNARTRKGPKRTVANKKK) are disordered. Over residues 106-121 (ARTRKGPKRTVANKKK) the composition is skewed to basic residues.

The protein belongs to the universal ribosomal protein uS13 family. As to quaternary structure, part of the 30S ribosomal subunit. Forms a loose heterodimer with protein S19. Forms two bridges to the 50S subunit in the 70S ribosome.

Located at the top of the head of the 30S subunit, it contacts several helices of the 16S rRNA. In the 70S ribosome it contacts the 23S rRNA (bridge B1a) and protein L5 of the 50S subunit (bridge B1b), connecting the 2 subunits; these bridges are implicated in subunit movement. Contacts the tRNAs in the A and P-sites. This chain is Small ribosomal subunit protein uS13, found in Shouchella clausii (strain KSM-K16) (Alkalihalobacillus clausii).